The sequence spans 100 residues: Aspartyl/glutamyl-tRNA(Asn/Gln) amidotransferase subunit C (100 aa).

The protein belongs to the GatC family. As to quaternary structure, heterotrimer of A, B and C subunits.

It catalyses the reaction L-glutamyl-tRNA(Gln) + L-glutamine + ATP + H2O = L-glutaminyl-tRNA(Gln) + L-glutamate + ADP + phosphate + H(+). It carries out the reaction L-aspartyl-tRNA(Asn) + L-glutamine + ATP + H2O = L-asparaginyl-tRNA(Asn) + L-glutamate + ADP + phosphate + 2 H(+). Its function is as follows. Allows the formation of correctly charged Asn-tRNA(Asn) or Gln-tRNA(Gln) through the transamidation of misacylated Asp-tRNA(Asn) or Glu-tRNA(Gln) in organisms which lack either or both of asparaginyl-tRNA or glutaminyl-tRNA synthetases. The reaction takes place in the presence of glutamine and ATP through an activated phospho-Asp-tRNA(Asn) or phospho-Glu-tRNA(Gln). This Streptococcus pyogenes serotype M49 (strain NZ131) protein is Aspartyl/glutamyl-tRNA(Asn/Gln) amidotransferase subunit C.